The sequence spans 212 residues: Sclerostin (212 aa).

An N-terminal signal peptide occupies residues 1-23 (MQLSLALCLVCLLVHAAFRVVEG). A glycan (N-linked (GlcNAc...) asparagine) is linked at Asn52. 4 disulfide bridges follow: Cys79–Cys133, Cys93–Cys147, Cys104–Cys164, and Cys108–Cys166. The CTCK domain occupies 81-171 (ELHFTRYVTD…ASCKCKRLTR (91 aa)). N-linked (GlcNAc...) asparagine glycosylation is present at Asn174. The interval 179–212 (KDFGPEAARPQTGRKLRPRARGTKASRAELENAY) is disordered. Residues 190–202 (TGRKLRPRARGTK) are compositionally biased toward basic residues.

It belongs to the sclerostin family. As to quaternary structure, interacts with LRP4 (via the extracellular domain); the interaction facilitates the inhibition of Wnt signaling. Interacts with LRP5 (via the first two YWTD-EGF repeat domains); the interaction inhibits Wnt-mediated signaling. Interacts with LRP6.

It localises to the secreted. It is found in the extracellular space. Its subcellular location is the extracellular matrix. In terms of biological role, negative regulator of bone growth that acts through inhibition of Wnt signaling and bone formation. This chain is Sclerostin, found in Bos taurus (Bovine).